The primary structure comprises 45 residues: Iota-conotoxin-like R11.12 (45 aa).

Cystine bridges form between Cys5-Cys19, Cys12-Cys22, Cys18-Cys27, and Cys21-Cys36. Position 43 is a D-leucine (Leu43). Residue Arg45 is a propeptide, removed by a carboxypeptidase.

This sequence belongs to the conotoxin I1 superfamily. Expressed by the venom duct.

It localises to the secreted. Its function is as follows. Iota-conotoxins bind to voltage-gated sodium channels (Nav) and act as agonists by shifting the voltage-dependence of activation to more hyperpolarized levels. Produces general excitatory symptoms. This Conus radiatus (Rayed cone) protein is Iota-conotoxin-like R11.12.